We begin with the raw amino-acid sequence, 500 residues long: 4-aminobutyrate aminotransferase, mitochondrial (500 aa).

The N-terminal 28 residues, 1-28, are a transit peptide targeting the mitochondrion; sequence MASMLVAQRLACSFQHSYRLLVPGSRHI. A [2Fe-2S] cluster-binding site is contributed by Cys-163. 164 to 165 is a binding site for pyridoxal 5'-phosphate; that stretch reads GS. Residue Cys-166 participates in [2Fe-2S] cluster binding. Arg-220 serves as a coordination point for substrate. At Lys-231 the chain carries N6-succinyllysine. N6-acetyllysine; alternate is present on Lys-252. The residue at position 252 (Lys-252) is an N6-succinyllysine; alternate. Residues Lys-279 and Lys-318 each carry the N6-acetyllysine modification. Lys-357 is modified (N6-(pyridoxal phosphate)lysine). Thr-381 is a pyridoxal 5'-phosphate binding site. The residue at position 413 (Lys-413) is an N6-acetyllysine; alternate. Residue Lys-413 is modified to N6-succinyllysine; alternate. Lys-452 and Lys-470 each carry N6-acetyllysine.

Belongs to the class-III pyridoxal-phosphate-dependent aminotransferase family. Homodimer; disulfide-linked. It depends on pyridoxal 5'-phosphate as a cofactor. [2Fe-2S] cluster serves as cofactor.

It localises to the mitochondrion matrix. The catalysed reaction is 4-aminobutanoate + 2-oxoglutarate = succinate semialdehyde + L-glutamate. The enzyme catalyses (S)-3-amino-2-methylpropanoate + 2-oxoglutarate = 2-methyl-3-oxopropanoate + L-glutamate. Its function is as follows. Catalyzes the conversion of gamma-aminobutyrate and L-beta-aminoisobutyrate to succinate semialdehyde and methylmalonate semialdehyde, respectively. Can also convert delta-aminovalerate and beta-alanine. The chain is 4-aminobutyrate aminotransferase, mitochondrial (ABAT) from Bos taurus (Bovine).